The following is a 1407-amino-acid chain: DNA-directed RNA polymerase subunit beta' (1407 aa).

4 residues coordinate Zn(2+): C70, C72, C85, and C88. 3 residues coordinate Mg(2+): D460, D462, and D464. 4 residues coordinate Zn(2+): C814, C888, C895, and C898.

This sequence belongs to the RNA polymerase beta' chain family. In terms of assembly, the RNAP catalytic core consists of 2 alpha, 1 beta, 1 beta' and 1 omega subunit. When a sigma factor is associated with the core the holoenzyme is formed, which can initiate transcription. Mg(2+) serves as cofactor. Requires Zn(2+) as cofactor.

The enzyme catalyses RNA(n) + a ribonucleoside 5'-triphosphate = RNA(n+1) + diphosphate. In terms of biological role, DNA-dependent RNA polymerase catalyzes the transcription of DNA into RNA using the four ribonucleoside triphosphates as substrates. In Cellvibrio japonicus (strain Ueda107) (Pseudomonas fluorescens subsp. cellulosa), this protein is DNA-directed RNA polymerase subunit beta'.